A 438-amino-acid chain; its full sequence is chitinase-like effector (438 aa).

Residues methionine 1 to alanine 23 form the signal peptide. One can recognise a GH18 domain in the interval phenylalanine 54–serine 437. Position 416 (tryptophan 416) interacts with chitin.

The protein belongs to the glycosyl hydrolase 18 family.

The protein resides in the secreted. Functionally, catalytically impaired chitinase that binds efficiently to chitin, but not to chitosan, xylan, or cellulose. Despite the lack of chitinolytic activity, retains substrate binding specificity and acts as an effector to prevent chitin-triggered immunity by sequestering immunogenic chitin fragments. Does not function in the protection of fungal cell wall against plant hydrolytic enzymes. This Moniliophthora perniciosa (Witches'-broom disease fungus) protein is chitinase-like effector.